The chain runs to 80 residues: Defensin-like protein 14 (80 aa).

The signal sequence occupies residues 1 to 29; that stretch reads MAKSAAIITFLFAALVLFAAFEAPIMVEA. Gln30 carries the post-translational modification Pyrrolidone carboxylic acid. Intrachain disulfides connect Cys33–Cys80, Cys44–Cys65, Cys50–Cys74, and Cys54–Cys76.

The protein belongs to the DEFL family.

Its subcellular location is the secreted. Its function is as follows. Confers broad-spectrum resistance to pathogens. Has antifungal activity in vitro. This chain is Defensin-like protein 14 (PDF1.3), found in Arabidopsis thaliana (Mouse-ear cress).